The primary structure comprises 357 residues: Queuosine-tRNA galactosyltransferase (357 aa).

It belongs to the glycosyltransferase 2 family.

The protein resides in the cytoplasm. It carries out the reaction queuosine(34) in tRNA(Tyr) + UDP-alpha-D-galactose = O-5''-beta-D-galactosylqueuosine(34) in tRNA(Tyr) + UDP + H(+). Functionally, glycosyltransferase that specifically catalyzes galactosylation of cytoplasmic tRNA(Tyr) modified with queuosine at position 34 (queuosine(34)). Galactosylates the cyclopentene hydroxyl group of queuosine(34) in tRNA(Tyr) to form galactosyl-queuosine(34). Mannosylation of queuosine(34) in tRNA(Tyr) is required to slow-down elongation at cognate codons UAC and suppress stop codon readthrough, thereby regulating protein translation. The protein is Queuosine-tRNA galactosyltransferase of Mus musculus (Mouse).